A 271-amino-acid chain; its full sequence is Phosphatidylglycerol--prolipoprotein diacylglyceryl transferase (271 aa).

The next 7 membrane-spanning stretches (helical) occupy residues 21–41, 60–80, 95–115, 124–144, 176–196, 203–223, and 230–250; these read ISVRWYGLMYLFGFLFAMWLA, LLFAGFLGVVLGGRIGYVLFY, VWTGGMSFHGGLLGVITAMLW, FFGVADFVAPLVPFGLGVGRL, SQLYEMALEGVLLFFILNWFI, GSVSGLFLAGYGTFRFLVEYV, and LGLFGGFISMGQILSSPMIIG. Arginine 143 serves as a coordination point for a 1,2-diacyl-sn-glycero-3-phospho-(1'-sn-glycerol).

The protein belongs to the Lgt family.

It is found in the cell inner membrane. The catalysed reaction is L-cysteinyl-[prolipoprotein] + a 1,2-diacyl-sn-glycero-3-phospho-(1'-sn-glycerol) = an S-1,2-diacyl-sn-glyceryl-L-cysteinyl-[prolipoprotein] + sn-glycerol 1-phosphate + H(+). It participates in protein modification; lipoprotein biosynthesis (diacylglyceryl transfer). Its function is as follows. Catalyzes the transfer of the diacylglyceryl group from phosphatidylglycerol to the sulfhydryl group of the N-terminal cysteine of a prolipoprotein, the first step in the formation of mature lipoproteins. The chain is Phosphatidylglycerol--prolipoprotein diacylglyceryl transferase from Vibrio vulnificus (strain YJ016).